The primary structure comprises 308 residues: GTP cyclohydrolase FolE2 (308 aa).

The protein belongs to the GTP cyclohydrolase IV family.

The enzyme catalyses GTP + H2O = 7,8-dihydroneopterin 3'-triphosphate + formate + H(+). It participates in cofactor biosynthesis; 7,8-dihydroneopterin triphosphate biosynthesis; 7,8-dihydroneopterin triphosphate from GTP: step 1/1. Its function is as follows. Converts GTP to 7,8-dihydroneopterin triphosphate. The sequence is that of GTP cyclohydrolase FolE2 from Colwellia psychrerythraea (strain 34H / ATCC BAA-681) (Vibrio psychroerythus).